Consider the following 120-residue polypeptide: Large ribosomal subunit protein P3 (120 aa).

The disordered stretch occupies residues 83–120 (GGGGAAASGGAAAEAPKEEKKEEEKEESDDDMGFSLFD).

Belongs to the eukaryotic ribosomal protein P1/P2 family. In terms of processing, phosphorylated.

Its function is as follows. Plays an important role in the elongation step of protein synthesis. The sequence is that of Large ribosomal subunit protein P3 (RPP3A) from Zea mays (Maize).